Here is a 380-residue protein sequence, read N- to C-terminus: Reducing-end xylose-releasing exo-oligoxylanase Rex8A (380 aa).

Glu-70 serves as the catalytic Proton donor. Asp-265 (proton acceptor) is an active-site residue.

The protein belongs to the glycosyl hydrolase 8 (cellulase D) family.

It carries out the reaction Hydrolysis of (1-&gt;4)-beta-D-xylose residues from the reducing end of oligosaccharides.. It participates in glycan degradation; xylan degradation. In terms of biological role, involved in depolymerization of xylan, a major component of the lignocellulosic substrates. Acts as an exo-oligoxylanase that efficiently hydrolyzes xylooligosaccharides, releasing xylose from their reducing ends. Hydrolyzes xylooligomers of 3 to 6 xylose units to xylose and xylobiose. Besides linear xylooligosaccharides, also hydrolyzes branched xylooligomers, such as xylooligomers decorated with 4-O-methyl-D-glucuronic acid moieties. Its proposed role is the degradation of xylooligomers produced by the activity of extracellular xylanases once they have been transported inside cells. Shows minor activity on polymeric xylan (glucuronoxylan from beechwood). Is not active on cellooligosaccharides or cellulosic substrates, or on other polysaccharides such as pectin, polygalacturonic acid, laminarin, or lichenan. This Paenibacillus barcinonensis protein is Reducing-end xylose-releasing exo-oligoxylanase Rex8A.